A 368-amino-acid polypeptide reads, in one-letter code: L-cysteine desulfhydrase Cds1 (368 aa).

Lys-67 carries the post-translational modification N6-(pyridoxal phosphate)lysine. Residues 203-207 (GTGGT) and Ser-299 contribute to the pyridoxal 5'-phosphate site.

Belongs to the cysteine synthase/cystathionine beta-synthase family. Cds1 subfamily. Pyridoxal 5'-phosphate is required as a cofactor.

The protein localises to the cytoplasm. The catalysed reaction is L-cysteine + H2O = hydrogen sulfide + pyruvate + NH4(+) + H(+). A cysteine desulfhydrase that generates hydrogen sulfide, H(2)S. The H(2)S produced by this enzyme stimulates respiration in M.tuberculosis, mediated primarily via cytochrome bd with a lesser contribution from cytochrome bc1/aa3. H(2)S modulates the balance between respiration and glycolysis, and also contributes to redox homeostasis. Probably eliminates toxic levels of Cys (which can induce oxidative stress). The chain is L-cysteine desulfhydrase Cds1 from Mycobacterium tuberculosis (strain ATCC 25177 / H37Ra).